Reading from the N-terminus, the 203-residue chain is Meiotically up-regulated protein PB17E12.09 (203 aa).

Positions 92 to 177 form a coiled coil; sequence CNRKIEGYIK…KEMQLYMTKI (86 aa).

Its subcellular location is the cytoplasm. Has a role in meiosis and sporulation. The sequence is that of Meiotically up-regulated protein PB17E12.09 from Schizosaccharomyces pombe (strain 972 / ATCC 24843) (Fission yeast).